Consider the following 494-residue polypeptide: Probable serine/threonine-protein kinase BSK3 (494 aa).

The N-myristoyl glycine moiety is linked to residue Gly2. The region spanning 61 to 316 (ENIVSEHGEK…SLVQALAPLQ (256 aa)) is the Protein kinase domain. ATP contacts are provided by residues 67 to 75 (HGEKAPNVV) and Lys89. Catalysis depends on Asp183, which acts as the Proton acceptor. Phosphoserine occurs at positions 213 and 215. The TPR repeat unit spans residues 423-456 (PTIYARRCLSYLMNDKAEQALSDAMQALVISPTW).

As to quaternary structure, interacts with BRI1 and BSL1. Phosphorylated at Ser-213 and Ser-215 by BRI1. Phosphorylation at Ser-215 is required for its function in the regulation of brassinosteroid signaling. Phosphorylation by BRI1 disrupts the interaction between its TPR and kinase domains, thereby increasing the binding between its kinase domain and BSL1.

The protein resides in the cell membrane. The catalysed reaction is L-seryl-[protein] + ATP = O-phospho-L-seryl-[protein] + ADP + H(+). It carries out the reaction L-threonyl-[protein] + ATP = O-phospho-L-threonyl-[protein] + ADP + H(+). Probable serine/threonine kinase that acts as a positive regulator of brassinosteroid (BR) signaling downstream of BRI1. In Oryza sativa subsp. japonica (Rice), this protein is Probable serine/threonine-protein kinase BSK3.